A 465-amino-acid chain; its full sequence is Lipase 10 (465 aa).

An N-terminal signal peptide occupies residues 1 to 16; sequence MKTLLIFLAFLSSIFA. The cysteines at positions 112 and 285 are disulfide-linked. Ser-196 acts as the Charge relay system in catalysis. Residues Asn-231 and Asn-319 are each glycosylated (N-linked (GlcNAc...) asparagine). Catalysis depends on charge relay system residues Asp-348 and His-381. A disulfide bridge links Cys-364 with Cys-409.

It belongs to the AB hydrolase superfamily. Lipase family. Class Lip subfamily.

The protein resides in the secreted. It carries out the reaction a triacylglycerol + H2O = a diacylglycerol + a fatty acid + H(+). In terms of biological role, secreted lipase that is able to hydrolyze both the neutral triacylglycerols and the monopalmitate ester Tween 40, allowing the use of hydrolyzed products as carbon sources. Has broad lipolytic activity, which may be important for colonization and subsequent infection, therefore contributing to the persistence and virulence in human tissue. The chain is Lipase 10 from Candida albicans (strain SC5314 / ATCC MYA-2876) (Yeast).